A 303-amino-acid chain; its full sequence is Kanosamine kinase (303 aa).

It belongs to the ROK (NagC/XylR) family.

The enzyme catalyses kanosamine + ATP = D-kanosamine 6-phosphate + ADP + H(+). Its pathway is antibiotic biosynthesis; rifamycin B biosynthesis. Its activity is regulated as follows. Inhibited by Zn(2+), Cu(2+), and Fe(2+). In terms of biological role, involved in the biosynthesis of 3-amino-5-hydroxybenzoate (AHBA), a compound that then serves as the starter unit for the assembly of a polyketide during the biosynthesis of rifamycin B and other ansamycin antibiotics. Catalyzes only the phosphorylation of kanosamine to yield kanosamine 6-phosphate. The protein is Kanosamine kinase (rifN) of Amycolatopsis mediterranei (strain S699) (Nocardia mediterranei).